The primary structure comprises 514 residues: ATP synthase subunit alpha (514 aa).

ATP is bound at residue 170-177 (GDRQTGKT).

This sequence belongs to the ATPase alpha/beta chains family. In terms of assembly, F-type ATPases have 2 components, CF(1) - the catalytic core - and CF(0) - the membrane proton channel. CF(1) has five subunits: alpha(3), beta(3), gamma(1), delta(1), epsilon(1). CF(0) has three main subunits: a(1), b(2) and c(9-12). The alpha and beta chains form an alternating ring which encloses part of the gamma chain. CF(1) is attached to CF(0) by a central stalk formed by the gamma and epsilon chains, while a peripheral stalk is formed by the delta and b chains.

Its subcellular location is the cell inner membrane. The enzyme catalyses ATP + H2O + 4 H(+)(in) = ADP + phosphate + 5 H(+)(out). In terms of biological role, produces ATP from ADP in the presence of a proton gradient across the membrane. The alpha chain is a regulatory subunit. This is ATP synthase subunit alpha from Psychrobacter sp. (strain PRwf-1).